Consider the following 408-residue polypeptide: UPF0761 membrane protein Avin_36810 (408 aa).

A run of 6 helical transmembrane segments spans residues 33–53 (YTALFAVVPIMTLIFVVLSVV), 92–112 (HLTWLGVGVLMVTALLMLMTV), 132–152 (FLLHWAILSLGPLLLGTGFAL), 174–194 (LLKVMPLLFSTAAFTLLYVAV), 209–229 (LFAAVLFEAAKGLFGLYVALF), and 238–258 (AFAAVPLFLLWMYLSWMIVLL).

It belongs to the UPF0761 family.

The protein resides in the cell inner membrane. This chain is UPF0761 membrane protein Avin_36810, found in Azotobacter vinelandii (strain DJ / ATCC BAA-1303).